The following is a 505-amino-acid chain: Band 7 protein CG42540 (505 aa).

The segment at 1-164 (MPDSMMDMEH…IHRAEARRAD (164 aa)) is disordered. A compositionally biased stretch (basic and acidic residues) spans 47–60 (SEERDRDRDRERDH). 2 stretches are compositionally biased toward low complexity: residues 82–104 (QLHQ…QQPQ) and 113–139 (QQQQ…QQLP). The helical transmembrane segment at 178–198 (LIFLSVALVIMTLPFSLFVCF) threads the bilayer. The interval 443–505 (GNTPPPLQLA…QQGQQISSAM (63 aa)) is disordered. Over residues 451-505 (LAPQQQMGQQQQPQYQQPQQQQQQYQPQQQQQQQQQQPQQQDQLYQQGQQISSAM) the composition is skewed to low complexity.

It belongs to the band 7/mec-2 family.

The protein resides in the membrane. The polypeptide is Band 7 protein CG42540 (Drosophila melanogaster (Fruit fly)).